Consider the following 363-residue polypeptide: 3-dehydroquinate synthase (363 aa).

NAD(+)-binding positions include 70–75 (SGETSK), 104–108 (GVIGD), 128–129 (TT), K141, K150, and 168–171 (TLDT). Positions 183, 245, and 262 each coordinate Zn(2+).

The protein belongs to the sugar phosphate cyclases superfamily. Dehydroquinate synthase family. It depends on Co(2+) as a cofactor. The cofactor is Zn(2+). NAD(+) is required as a cofactor.

The protein resides in the cytoplasm. It catalyses the reaction 7-phospho-2-dehydro-3-deoxy-D-arabino-heptonate = 3-dehydroquinate + phosphate. It functions in the pathway metabolic intermediate biosynthesis; chorismate biosynthesis; chorismate from D-erythrose 4-phosphate and phosphoenolpyruvate: step 2/7. Functionally, catalyzes the conversion of 3-deoxy-D-arabino-heptulosonate 7-phosphate (DAHP) to dehydroquinate (DHQ). The chain is 3-dehydroquinate synthase from Alkaliphilus oremlandii (strain OhILAs) (Clostridium oremlandii (strain OhILAs)).